We begin with the raw amino-acid sequence, 124 residues long: Large ribosomal subunit protein bL21 (124 aa).

The tract at residues 105–124 (TVKAEPKSKRAPAPEAAADA) is disordered. Positions 115-124 (APAPEAAADA) are enriched in low complexity.

Belongs to the bacterial ribosomal protein bL21 family. As to quaternary structure, part of the 50S ribosomal subunit. Contacts protein L20.

Its function is as follows. This protein binds to 23S rRNA in the presence of protein L20. The sequence is that of Large ribosomal subunit protein bL21 from Xanthobacter autotrophicus (strain ATCC BAA-1158 / Py2).